The primary structure comprises 1198 residues: Tetratricopeptide repeat protein 17 (1198 aa).

The TPR 1 repeat unit spans residues phenylalanine 295–phenylalanine 328. The stretch at cysteine 340–histidine 382 forms a coiled coil. TPR repeat units lie at residues tryptophan 619–glutamine 652 and proline 689–cysteine 722. Disordered regions lie at residues proline 771–glutamate 825 and lysine 903–asparagine 924. Residues lysine 903–glycine 914 are compositionally biased toward basic residues. 3 TPR repeats span residues serine 1071–glutamine 1105, aspartate 1108–phenylalanine 1141, and alanine 1142–phenylalanine 1175.

Belongs to the TTC17 family. As to quaternary structure, interacts with CATIP. Expressed in germ cells as well as in somatic cells of the testis (at protein level). Ubiquitous.

The protein resides in the cytoplasm. The protein localises to the cell membrane. It localises to the cytoskeleton. In terms of biological role, plays a role in primary ciliogenesis by modulating actin polymerization. In Rattus norvegicus (Rat), this protein is Tetratricopeptide repeat protein 17 (Ttc17).